The chain runs to 86 residues: Sec-independent protein translocase protein TatA (86 aa).

A helical membrane pass occupies residues 1–21 (MGGISIWQLLIIAVIVVLLFG). A disordered region spans residues 42–86 (AIGDDNQPQQAQKTSSDADFETKNITEKQSVAQSETSESKNKEQV). 2 stretches are compositionally biased toward polar residues: residues 47-58 (NQPQQAQKTSSD) and 68-77 (EKQSVAQSET).

Belongs to the TatA/E family. The Tat system comprises two distinct complexes: a TatABC complex, containing multiple copies of TatA, TatB and TatC subunits, and a separate TatA complex, containing only TatA subunits. Substrates initially bind to the TatABC complex, which probably triggers association of the separate TatA complex to form the active translocon.

The protein localises to the cell inner membrane. Functionally, part of the twin-arginine translocation (Tat) system that transports large folded proteins containing a characteristic twin-arginine motif in their signal peptide across membranes. TatA could form the protein-conducting channel of the Tat system. The chain is Sec-independent protein translocase protein TatA from Photorhabdus laumondii subsp. laumondii (strain DSM 15139 / CIP 105565 / TT01) (Photorhabdus luminescens subsp. laumondii).